Consider the following 153-residue polypeptide: Endoribonuclease YbeY (153 aa).

Zn(2+) is bound by residues H114, H118, and H124.

It belongs to the endoribonuclease YbeY family. The cofactor is Zn(2+).

The protein resides in the cytoplasm. In terms of biological role, single strand-specific metallo-endoribonuclease involved in late-stage 70S ribosome quality control and in maturation of the 3' terminus of the 16S rRNA. The polypeptide is Endoribonuclease YbeY (Shewanella baltica (strain OS185)).